We begin with the raw amino-acid sequence, 429 residues long: Ribosomal RNA small subunit methyltransferase B (429 aa).

S-adenosyl-L-methionine-binding positions include 254–260 (CAAPGGK), aspartate 277, aspartate 303, and aspartate 322. The active-site Nucleophile is the cysteine 375.

It belongs to the class I-like SAM-binding methyltransferase superfamily. RsmB/NOP family.

Its subcellular location is the cytoplasm. The enzyme catalyses cytidine(967) in 16S rRNA + S-adenosyl-L-methionine = 5-methylcytidine(967) in 16S rRNA + S-adenosyl-L-homocysteine + H(+). In terms of biological role, specifically methylates the cytosine at position 967 (m5C967) of 16S rRNA. This chain is Ribosomal RNA small subunit methyltransferase B, found in Photorhabdus laumondii subsp. laumondii (strain DSM 15139 / CIP 105565 / TT01) (Photorhabdus luminescens subsp. laumondii).